The sequence spans 602 residues: Probable beta-glucosidase btgE (602 aa).

A signal peptide spans 1–18 (MRGAFLAAAAAVAGTAMA). 2 disordered regions span residues 61-94 (PPTL…SVVT) and 116-166 (GVDA…TSFS). The span at 74-94 (PSSSSSSEVPSVPSSESSVVT) shows a compositional bias: low complexity. A compositionally biased stretch (polar residues) spans 152–166 (TSESPLPTPGVTSFS). E443 serves as the catalytic Proton donor. E538 acts as the Nucleophile in catalysis.

The protein belongs to the glycosyl hydrolase 17 family.

Its subcellular location is the secreted. The protein resides in the cell wall. The catalysed reaction is Hydrolysis of terminal, non-reducing beta-D-glucosyl residues with release of beta-D-glucose.. It functions in the pathway glycan metabolism; cellulose degradation. In terms of biological role, beta-glucosidases are one of a number of cellulolytic enzymes involved in the degradation of cellulosic biomass. Catalyzes the last step releasing glucose from the inhibitory cellobiose. This Aspergillus flavus (strain ATCC 200026 / FGSC A1120 / IAM 13836 / NRRL 3357 / JCM 12722 / SRRC 167) protein is Probable beta-glucosidase btgE (btgE).